The primary structure comprises 617 residues: Probable endochitinase (617 aa).

Positions 53 to 426 (YIRPCYFTNW…SVIAKELGGV (374 aa)) constitute a GH18 domain. An intrachain disulfide couples Cys-57 to Cys-82. Residues 109 to 110 (DW) and 136 to 139 (GGWS) contribute to the chitin site. Glu-179 functions as the Proton donor in the catalytic mechanism. Chitin contacts are provided by residues Tyr-180 and 245 to 248 (MSYD). A glycan (N-linked (GlcNAc...) asparagine) is linked at Asn-310. Trp-394 contacts chitin. 2 consecutive Chitin-binding type-2 domains span residues 478–534 (TNVC…GCSV) and 563–617 (AFKC…KCAK). 2 disulfides stabilise this stretch: Cys-511/Cys-524 and Cys-594/Cys-607.

Belongs to the glycosyl hydrolase 18 family. Chitinase class II subfamily.

The enzyme catalyses Random endo-hydrolysis of N-acetyl-beta-D-glucosaminide (1-&gt;4)-beta-linkages in chitin and chitodextrins.. The polypeptide is Probable endochitinase (cht-1) (Caenorhabditis elegans).